Consider the following 60-residue polypeptide: Small ribosomal subunit protein bS21 (60 aa).

The interval 35–60 (REHYEKPSVKRKKKSEAARRRKSKVR) is disordered. The span at 43–60 (VKRKKKSEAARRRKSKVR) shows a compositional bias: basic residues.

It belongs to the bacterial ribosomal protein bS21 family.

This Clostridium novyi (strain NT) protein is Small ribosomal subunit protein bS21.